The sequence spans 474 residues: Probable glycine dehydrogenase (decarboxylating) subunit 2 (474 aa).

The residue at position 262 (Lys-262) is an N6-(pyridoxal phosphate)lysine.

Belongs to the GcvP family. C-terminal subunit subfamily. The glycine cleavage system is composed of four proteins: P, T, L and H. In this organism, the P 'protein' is a heterodimer of two subunits. The cofactor is pyridoxal 5'-phosphate.

The enzyme catalyses N(6)-[(R)-lipoyl]-L-lysyl-[glycine-cleavage complex H protein] + glycine + H(+) = N(6)-[(R)-S(8)-aminomethyldihydrolipoyl]-L-lysyl-[glycine-cleavage complex H protein] + CO2. In terms of biological role, the glycine cleavage system catalyzes the degradation of glycine. The P protein binds the alpha-amino group of glycine through its pyridoxal phosphate cofactor; CO(2) is released and the remaining methylamine moiety is then transferred to the lipoamide cofactor of the H protein. This chain is Probable glycine dehydrogenase (decarboxylating) subunit 2, found in Thermotoga maritima (strain ATCC 43589 / DSM 3109 / JCM 10099 / NBRC 100826 / MSB8).